The primary structure comprises 627 residues: Mitochondrial distribution and morphology protein 34 (627 aa).

Positions 1-195 constitute an SMP-LTD domain; that stretch reads MAFNFNWSPL…LPAIIHRLSL (195 aa). 4 disordered regions span residues 209–230, 332–470, 486–557, and 586–627; these read SAQVTNPSLDGPGLDPLLNPPQ, ASLA…RTSP, LQRQ…SRPS, and RIQD…AYRH. Composition is skewed to low complexity over residues 215-225 and 332-341; these read PSLDGPGLDPL and ASLASSSHSR. The segment covering 360–372 has biased composition (basic residues); sequence RHSKAHARKRKKR. A compositionally biased stretch (basic and acidic residues) spans 373 to 384; sequence VVDLRRRPKSAD. Over residues 390–412 the composition is skewed to low complexity; sequence SGESAYTETSTTTSAVSVFSGST. The span at 436–451 shows a compositional bias: basic and acidic residues; sequence TLRDRIAARDDAERNS. Residues 528–557 are compositionally biased toward low complexity; the sequence is PNASNNYTSSSSPSARDPQQQQPQQLSRPS.

The protein belongs to the MDM34 family. Component of the ER-mitochondria encounter structure (ERMES) or MDM complex, composed of MMM1, MDM10, MDM12 and MDM34.

Its subcellular location is the mitochondrion outer membrane. Functionally, component of the ERMES/MDM complex, which serves as a molecular tether to connect the endoplasmic reticulum (ER) and mitochondria. Components of this complex are involved in the control of mitochondrial shape and protein biogenesis, and function in nonvesicular lipid trafficking between the ER and mitochondria. MDM34 is required for the interaction of the ER-resident membrane protein MMM1 and the outer mitochondrial membrane-resident beta-barrel protein MDM10. The polypeptide is Mitochondrial distribution and morphology protein 34 (Blastomyces gilchristii (strain SLH14081) (Blastomyces dermatitidis)).